A 180-amino-acid polypeptide reads, in one-letter code: NAD(P)H-quinone oxidoreductase subunit I, chloroplastic (180 aa).

2 consecutive 4Fe-4S ferredoxin-type domains span residues 55–84 (GRIHFEFDKCIACEVCVRVCPIDLPLVDWR) and 95–124 (LNYSIDFGVCIFCGNCVEYCPTNCLSMTEE). Residues Cys64, Cys67, Cys70, Cys74, Cys104, Cys107, Cys110, and Cys114 each coordinate [4Fe-4S] cluster.

The protein belongs to the complex I 23 kDa subunit family. As to quaternary structure, NDH is composed of at least 16 different subunits, 5 of which are encoded in the nucleus. [4Fe-4S] cluster serves as cofactor.

The protein localises to the plastid. The protein resides in the chloroplast thylakoid membrane. The catalysed reaction is a plastoquinone + NADH + (n+1) H(+)(in) = a plastoquinol + NAD(+) + n H(+)(out). It catalyses the reaction a plastoquinone + NADPH + (n+1) H(+)(in) = a plastoquinol + NADP(+) + n H(+)(out). NDH shuttles electrons from NAD(P)H:plastoquinone, via FMN and iron-sulfur (Fe-S) centers, to quinones in the photosynthetic chain and possibly in a chloroplast respiratory chain. The immediate electron acceptor for the enzyme in this species is believed to be plastoquinone. Couples the redox reaction to proton translocation, and thus conserves the redox energy in a proton gradient. The chain is NAD(P)H-quinone oxidoreductase subunit I, chloroplastic from Zea mays (Maize).